The following is a 115-amino-acid chain: Ribonuclease P protein component (115 aa).

It belongs to the RnpA family. In terms of assembly, consists of a catalytic RNA component (M1 or rnpB) and a protein subunit.

It carries out the reaction Endonucleolytic cleavage of RNA, removing 5'-extranucleotides from tRNA precursor.. Functionally, RNaseP catalyzes the removal of the 5'-leader sequence from pre-tRNA to produce the mature 5'-terminus. It can also cleave other RNA substrates such as 4.5S RNA. The protein component plays an auxiliary but essential role in vivo by binding to the 5'-leader sequence and broadening the substrate specificity of the ribozyme. The protein is Ribonuclease P protein component of Natranaerobius thermophilus (strain ATCC BAA-1301 / DSM 18059 / JW/NM-WN-LF).